Reading from the N-terminus, the 432-residue chain is Tryptophan--tRNA ligase (432 aa).

ATP-binding positions include 13 to 15 (TTS) and 21 to 22 (GN). The short motif at 14–22 (TSGTPHLGN) is the 'HIGH' region element. Residue Asp146 participates in L-tryptophan binding. ATP is bound by residues 158-160 (GRD), Leu198, and 205-209 (KMSKS). The short motif at 205–209 (KMSKS) is the 'KMSKS' region element.

The protein belongs to the class-I aminoacyl-tRNA synthetase family. As to quaternary structure, homodimer.

The protein resides in the cytoplasm. It catalyses the reaction tRNA(Trp) + L-tryptophan + ATP = L-tryptophyl-tRNA(Trp) + AMP + diphosphate + H(+). Catalyzes the attachment of tryptophan to tRNA(Trp). The protein is Tryptophan--tRNA ligase of Xanthomonas axonopodis pv. citri (strain 306).